A 521-amino-acid polypeptide reads, in one-letter code: GMP synthase [glutamine-hydrolyzing] (521 aa).

Residues Lys8–Leu203 form the Glutamine amidotransferase type-1 domain. Catalysis depends on Cys85, which acts as the Nucleophile. Active-site residues include His177 and Glu179. Residues Trp204 to Arg396 enclose the GMPS ATP-PPase domain. Ser231–Ser237 serves as a coordination point for ATP.

In terms of assembly, homodimer.

It catalyses the reaction XMP + L-glutamine + ATP + H2O = GMP + L-glutamate + AMP + diphosphate + 2 H(+). It participates in purine metabolism; GMP biosynthesis; GMP from XMP (L-Gln route): step 1/1. Catalyzes the synthesis of GMP from XMP. The polypeptide is GMP synthase [glutamine-hydrolyzing] (Xanthomonas campestris pv. campestris (strain B100)).